We begin with the raw amino-acid sequence, 619 residues long: MALLQIAEPGQSPKPHERRLAVGIDLGTTNSLVAAVRSGVAEPLPDAQGRLILPSAVRYHAERAEVGESARAAAAKDPFNTIISVKRLMGRGLEDVKQLGEQLPYRFRQGESHMPFIETVQGLKSPVEVSADILRELRQRAETTLGGELVGAVITVPAYFDDAQRQATKDAARLAGLNVLRLLNEPTAAAVAYGLDKGAEGLVAIYDLGGGTFDISILRLTRGVFEVLATGGDTALGGDDFDHAIAGWVIEQAGLSADLDPGSQRQLLQIACAAKERLTDEASVRVAYGDWSGELSRATLDELIEPFVARSLKSCRRAVRDSGVDLEEIRSVVMVGGSTRVPRVRTAVGELFGCEPLTDIDPDQVVAIGAAIQADALAGNKRGEELLLLDVIPLSLGLETMGGLMEKVIPRNTTIPVARAQEFTTYKDGQTAMMIHVLQGERELVKDCRSLARFELRGIPPMVAGAAKIRVTFQVDADGLLGVSARELSSGVEASIQVKPSYGLTDGEIARMLKDSFDYAGDDKAARALREQQVEAQRLLEAVQSALDVDGERLLDEEERLAIAAQMDTLRELAGGSDTAAIENQIKRLSQVTDAFAARRMDATVKAALSGRRLNEIEE.

It belongs to the heat shock protein 70 family.

Its function is as follows. Chaperone involved in the maturation of iron-sulfur cluster-containing proteins. Has a low intrinsic ATPase activity which is markedly stimulated by HscB. This is Chaperone protein HscA homolog from Pseudomonas aeruginosa (strain UCBPP-PA14).